Consider the following 722-residue polypeptide: Polyribonucleotide nucleotidyltransferase (722 aa).

Residues aspartate 495 and aspartate 501 each coordinate Mg(2+). One can recognise a KH domain in the interval 562–621; sequence PRLLSFRIDPELIGTVIGPGGRTIKGITERTNTKIDIEDGGIVTIASHDGVAAEEAQKII. An S1 motif domain is found at 631 to 699; that stretch reads GEVFTGSITR…NRGRINLTLR (69 aa).

Belongs to the polyribonucleotide nucleotidyltransferase family. Mg(2+) serves as cofactor.

Its subcellular location is the cytoplasm. The enzyme catalyses RNA(n+1) + phosphate = RNA(n) + a ribonucleoside 5'-diphosphate. Its function is as follows. Involved in mRNA degradation. Catalyzes the phosphorolysis of single-stranded polyribonucleotides processively in the 3'- to 5'-direction. The chain is Polyribonucleotide nucleotidyltransferase from Prochlorococcus marinus (strain SARG / CCMP1375 / SS120).